A 495-amino-acid chain; its full sequence is 3-octaprenyl-4-hydroxybenzoate carboxy-lyase (495 aa).

Mn(2+) is bound at residue asparagine 172. Residues 175–177, 189–191, and 194–195 contribute to the prenylated FMN site; these read IYR, RWL, and RG. Position 238 (glutamate 238) interacts with Mn(2+). Residue aspartate 287 is the Proton donor of the active site.

This sequence belongs to the UbiD family. Homohexamer. It depends on prenylated FMN as a cofactor. Mn(2+) serves as cofactor.

It is found in the cell membrane. The catalysed reaction is a 4-hydroxy-3-(all-trans-polyprenyl)benzoate + H(+) = a 2-(all-trans-polyprenyl)phenol + CO2. The protein operates within cofactor biosynthesis; ubiquinone biosynthesis. Catalyzes the decarboxylation of 3-octaprenyl-4-hydroxy benzoate to 2-octaprenylphenol, an intermediate step in ubiquinone biosynthesis. The chain is 3-octaprenyl-4-hydroxybenzoate carboxy-lyase from Yersinia pestis bv. Antiqua (strain Angola).